The following is a 340-amino-acid chain: Phosphoribosylformylglycinamidine cyclo-ligase (340 aa).

This sequence belongs to the AIR synthase family.

It localises to the cytoplasm. It catalyses the reaction 2-formamido-N(1)-(5-O-phospho-beta-D-ribosyl)acetamidine + ATP = 5-amino-1-(5-phospho-beta-D-ribosyl)imidazole + ADP + phosphate + H(+). The protein operates within purine metabolism; IMP biosynthesis via de novo pathway; 5-amino-1-(5-phospho-D-ribosyl)imidazole from N(2)-formyl-N(1)-(5-phospho-D-ribosyl)glycinamide: step 2/2. The sequence is that of Phosphoribosylformylglycinamidine cyclo-ligase from Streptococcus uberis (strain ATCC BAA-854 / 0140J).